Reading from the N-terminus, the 394-residue chain is 3-ketosteroid-9-alpha-monooxygenase, oxygenase component (394 aa).

The region spanning 27–129 (WHCLGLAKDF…TLDQDGLLFV (103 aa)) is the Rieske domain. 4 residues coordinate [2Fe-2S] cluster: cysteine 68, histidine 70, cysteine 87, and histidine 90. The Fe cation site is built by asparagine 175, histidine 181, and histidine 186. Substrate is bound at residue tyrosine 245. Position 305 (aspartate 305) interacts with Fe cation.

In terms of assembly, homotrimer. The two-component system 3-ketosteroid-9-alpha-monooxygenase is composed of an oxygenase component KshA and a reductase component KshB. The cofactor is [2Fe-2S] cluster. Requires Fe cation as cofactor.

The catalysed reaction is androsta-1,4-diene-3,17-dione + 2 reduced [2Fe-2S]-[ferredoxin] + O2 + 2 H(+) = 9alpha-hydroxyandrosta-1,4-diene-3,17-dione + 2 oxidized [2Fe-2S]-[ferredoxin] + H2O. May be involved in the degradation of cholic acid, a steroid acid found predominantly in the bile. In vitro, catalyzes the introduction of a 9alpha-hydroxyl moiety into the ring B of 3-ketosteroid substrates such as 1,4-androstadiene-3,17-dione (ADD), 4-androstene-3,17-dione (AD), 4-androstene-17beta-ol-3-one (testosterone), 4-pregnene-3,20-dione (progesterone), 3-oxo-23,24-bisnorcholesta-4-en-22-oate (4-BNC), 23,24-bisnorcholesta-4-ene-22-oate, 3-oxo-23,24-bisnorcholaesta-1,4-dien-22-oate (1,4-BNC), 23,24-bisnorcholesta-1,4-diene-22-oate and 3-oxo-23,24-bisnorcholesta-1,4-dien-22-oyl-coenzyme A thioester (1,4-BNC-CoA). KshA1 has the highest specificity for steroids possessing an isopropionyl side chain at C17. The sequence is that of 3-ketosteroid-9-alpha-monooxygenase, oxygenase component from Rhodococcus rhodochrous.